The following is a 610-amino-acid chain: Zinc metalloproteinase-disintegrin-like BITM06A (610 aa).

An N-terminal signal peptide occupies residues Met-1–Ser-20. The propeptide occupies Ile-21–Ala-189. Residues Arg-198–Pro-394 enclose the Peptidase M12B domain. The Ca(2+) site is built by Glu-201 and Asp-285. 3 disulfide bridges follow: Cys-309/Cys-389, Cys-349/Cys-373, and Cys-351/Cys-356. His-334 provides a ligand contact to Zn(2+). Glu-335 is a catalytic residue. Residues His-338 and His-344 each contribute to the Zn(2+) site. Residue Asn-372 is glycosylated (N-linked (GlcNAc...) asparagine). Cys-389, Asn-392, Val-404, Asn-407, Leu-409, Glu-411, Glu-414, and Asp-417 together coordinate Ca(2+). A Disintegrin domain is found at Pro-402–Asn-488. Intrachain disulfides connect Cys-405-Cys-434, Cys-416-Cys-429, Cys-418-Cys-424, Cys-428-Cys-451, Cys-442-Cys-448, Cys-447-Cys-473, Cys-460-Cys-480, Cys-467-Cys-499, Cys-492-Cys-504, Cys-511-Cys-561, Cys-526-Cys-572, Cys-539-Cys-549, Cys-556-Cys-598, and Cys-592-Cys-603. A D/ECD-tripeptide motif is present at residues Glu-466–Asp-468. Ca(2+) contacts are provided by Asp-468, Pro-469, Glu-471, Asp-483, and Val-484.

This sequence belongs to the venom metalloproteinase (M12B) family. P-III subfamily. P-IIIa sub-subfamily. As to quaternary structure, monomer. It depends on Zn(2+) as a cofactor. In terms of tissue distribution, expressed by the venom gland.

The protein localises to the secreted. Functionally, snake venom metalloproteinase that impairs hemostasis in the envenomed animal. This is Zinc metalloproteinase-disintegrin-like BITM06A from Bothrops insularis (Golden lancehead).